Here is a 407-residue protein sequence, read N- to C-terminus: Large ribosomal subunit protein uL4y (407 aa).

The tract at residues 57 to 96 (PYAVSKKAGHQTSAESWGTGRAVSRIPRVPGGGTHRAGQA) is disordered.

This sequence belongs to the universal ribosomal protein uL4 family.

This chain is Large ribosomal subunit protein uL4y (RPL4D), found in Arabidopsis thaliana (Mouse-ear cress).